Reading from the N-terminus, the 624-residue chain is Chaperone protein HtpG (624 aa).

Positions 1 to 336 (MKGQETRGFQ…SSDLSLNVSR (336 aa)) are a; substrate-binding. The b stretch occupies residues 337 to 552 (EILQDSTVTR…ADEMSTQMAK (216 aa)). The tract at residues 553–624 (LFAAAGQKVP…IRRMNQLLVS (72 aa)) is c.

It belongs to the heat shock protein 90 family. As to quaternary structure, homodimer.

Its subcellular location is the cytoplasm. Its function is as follows. Molecular chaperone. Has ATPase activity. In Shigella dysenteriae serotype 1 (strain Sd197), this protein is Chaperone protein HtpG.